Here is a 1023-residue protein sequence, read N- to C-terminus: MPKSYTPVHDSIPEEDHFSSDDESNFRLHRIDRSASRSQSPKENEGEPSILAPLVRKSTDFETYLDSLTEDEQQLLSASKDHDIEDLDRFGDGTAAARRRFSESKKRRKLLAKRGGWRAVYYSKTWWRTLVVVIIALGLLVWGFLKYASTRGDIWEEYDMPGPDSYFPTPKGGTLKHWAESYEKASKLVERMTLIEKVNITTGTGWQMGINSKLTISGPAALVGFPSLCLQDGPLGIRFADHITAFPAGITTGATWNRDLMRQRGAAIGLEARLKGVNVILGPSMGPLGMMPAGGRNWEGFGSDPVLQAVAAVETIHGIQSNGVMATAKHYIMNEQEHFRQPNEWGIPYALSSNIDDRALHEVFLWPFAESIRADVASVMCSYNQVNNSHACENSKLLNGILKDELGFQGFVQSDWLAQRSGVNSALGGLDMSMPGDGLHWADGRSLWGSELTRAALNTSVPMERLNDMVTRIVAAWYQLGQDSWESPAPDGDGGPNFSSWTDDEFGFRYPGSPGDTSAARVNRFIDAQGRGEEGHWNIARKVAAEGIVLVKNVGGVLPLSRSPRANAERPYRVGVYGDDGGPAAGPNICTDRGCNSGTLAMGWGSGTVEFPYLISPIDALQGAWQSDVQMTPYLRNAVMPADTSDKDLCLVFVNADSGEGYISAGGIHGDRNNLFLQKGGDTLVHTVATNCGGPTVVVVHAVGPVIVEPWIDLPGVQAVLFAHLPGEESGNALLDVLFGDVDASGRLPYTVGKSLEDYGPGAQVLYEPNAPVPQVDFSDALYIDHRYFDRNNINPRYEFGFGLSYTKWELTNMKITRLQRNPSRLPAARPPDAVAPPSYDANPPLANESVLFPPGFRILSKYIYPYLPTLEATTPPPPNPEASGSATDQKPHRTKPSDAGGGAGGNPSLYEEVARIDLTVQNTGTRSGQQVIQLYVSFPHTVTESSGQKSHENIDFPDRVLRNFTKISLAPGQKMDVNMTLTRKDLSYWSVREQNWVLPKDEFYFWVGYSSRNLPLGKPFDP.

Positions 1 to 51 (MPKSYTPVHDSIPEEDHFSSDDESNFRLHRIDRSASRSQSPKENEGEPSIL) are disordered. The Cytoplasmic portion of the chain corresponds to 1–128 (MPKSYTPVHD…AVYYSKTWWR (128 aa)). The span at 11 to 45 (SIPEEDHFSSDDESNFRLHRIDRSASRSQSPKENE) shows a compositional bias: basic and acidic residues. The helical; Signal-anchor for type II membrane protein transmembrane segment at 129–149 (TLVVVIIALGLLVWGFLKYAS) threads the bilayer. Residues 150–1023 (TRGDIWEEYD…NLPLGKPFDP (874 aa)) lie on the Extracellular side of the membrane. Residues asparagine 199 and asparagine 387 are each glycosylated (N-linked (GlcNAc...) asparagine). Aspartate 415 is a catalytic residue. N-linked (GlcNAc...) asparagine glycans are attached at residues asparagine 458 and asparagine 497. 2 disordered regions span residues 485-515 (WESP…GSPG) and 822-841 (NPSR…PSYD). The span at 827–838 (PAARPPDAVAPP) shows a compositional bias: low complexity. Asparagine 848 is a glycosylation site (N-linked (GlcNAc...) asparagine). A disordered region spans residues 873-909 (ATTPPPPNPEASGSATDQKPHRTKPSDAGGGAGGNPS). N-linked (GlcNAc...) asparagine glycosylation is found at asparagine 964 and asparagine 979.

The protein belongs to the glycosyl hydrolase 3 family.

It localises to the cell membrane. It catalyses the reaction Hydrolysis of terminal, non-reducing beta-D-glucosyl residues with release of beta-D-glucose.. It functions in the pathway glycan metabolism; cellulose degradation. Its function is as follows. Beta-glucosidases are one of a number of cellulolytic enzymes involved in the degradation of cellulosic biomass. Catalyzes the last step releasing glucose from the inhibitory cellobiose. The sequence is that of Probable beta-glucosidase E (bglE) from Emericella nidulans (strain FGSC A4 / ATCC 38163 / CBS 112.46 / NRRL 194 / M139) (Aspergillus nidulans).